Here is a 55-residue protein sequence, read N- to C-terminus: Large ribosomal subunit protein bL33 (55 aa).

This sequence belongs to the bacterial ribosomal protein bL33 family.

The chain is Large ribosomal subunit protein bL33 from Buchnera aphidicola subsp. Baizongia pistaciae (strain Bp).